A 712-amino-acid polypeptide reads, in one-letter code: uncharacterized protein (712 aa).

Disordered regions lie at residues 1-46 (MAKI…NNLN), 107-264 (NIKP…IPQA), and 370-389 (QPQHQQNQQNQQNQQNQQNQ). 3 stretches are compositionally biased toward low complexity: residues 10–46 (INNSLNLNNSNSNSNSNSSININNNNNSNNSNNNNLN), 107–143 (NIKPSQQNSPQNNSNSNNINININNNSNNGNSTSNSS), and 161–173 (TFDNQQTSNNSSN). Over residues 178-187 (ISPTTSPQLE) the composition is skewed to polar residues. 2 stretches are compositionally biased toward low complexity: residues 188 to 198 (QHQQYQQQQHQ) and 241 to 264 (PLQQQQQPQPQQQPQPQQQQIPQA).

This is an uncharacterized protein from Dictyostelium discoideum (Social amoeba).